A 327-amino-acid polypeptide reads, in one-letter code: tRNA N6-adenosine threonylcarbamoyltransferase (327 aa).

Fe cation is bound by residues H107 and H111. Residues 129–133 (LVSGG), D162, G175, and N263 contribute to the substrate site. D291 contributes to the Fe cation binding site.

This sequence belongs to the KAE1 / TsaD family. Requires Fe(2+) as cofactor.

The protein localises to the cytoplasm. It catalyses the reaction L-threonylcarbamoyladenylate + adenosine(37) in tRNA = N(6)-L-threonylcarbamoyladenosine(37) in tRNA + AMP + H(+). Functionally, required for the formation of a threonylcarbamoyl group on adenosine at position 37 (t(6)A37) in tRNAs that read codons beginning with adenine. Is involved in the transfer of the threonylcarbamoyl moiety of threonylcarbamoyl-AMP (TC-AMP) to the N6 group of A37, together with TsaE and TsaB. TsaD likely plays a direct catalytic role in this reaction. The sequence is that of tRNA N6-adenosine threonylcarbamoyltransferase from Nautilia profundicola (strain ATCC BAA-1463 / DSM 18972 / AmH).